Reading from the N-terminus, the 743-residue chain is Threonine--tRNA ligase (743 aa).

A compositionally biased stretch (low complexity) spans 1-15 (MSADSPSSPASSQAA). The interval 1-30 (MSADSPSSPASSQAAEVQVRLPDGSLKTQP) is disordered. The TGS domain maps to 13-76 (QAAEVQVRLP…GEIADDENVV (64 aa)). The segment at 264 to 619 (DHRVLGKQHG…LIEHFAGAFP (356 aa)) is catalytic. The segment at 354–404 (AWSTRLDKDDLSKDDEDKLIAAAEVFGVKLPDYKPSASNDAKKDVLHRWQL) is insert. Residues Cys416, His467, and His596 each contribute to the Zn(2+) site.

Belongs to the class-II aminoacyl-tRNA synthetase family. Homodimer. The cofactor is Zn(2+).

The protein localises to the cytoplasm. The enzyme catalyses tRNA(Thr) + L-threonine + ATP = L-threonyl-tRNA(Thr) + AMP + diphosphate + H(+). Catalyzes the attachment of threonine to tRNA(Thr) in a two-step reaction: L-threonine is first activated by ATP to form Thr-AMP and then transferred to the acceptor end of tRNA(Thr). Also edits incorrectly charged L-seryl-tRNA(Thr). The protein is Threonine--tRNA ligase of Rhodopirellula baltica (strain DSM 10527 / NCIMB 13988 / SH1).